The sequence spans 185 residues: FK506-binding protein 2 (185 aa).

The signal sequence occupies residues 1-20; the sequence is MQGLLLSLSLLASAAVGVLA. Residues 41-129 form the PPIase FKBP-type domain; the sequence is GDKINVHYKG…VFETELVGIE (89 aa). The Prevents secretion from ER signature appears at 182–185; it reads HNEL.

This sequence belongs to the FKBP-type PPIase family. FKBP2 subfamily.

Its subcellular location is the endoplasmic reticulum. The catalysed reaction is [protein]-peptidylproline (omega=180) = [protein]-peptidylproline (omega=0). Its activity is regulated as follows. Inhibited by both FK506 and rapamycin. In terms of biological role, PPIases accelerate the folding of proteins. It catalyzes the cis-trans isomerization of proline imidic peptide bonds in oligopeptides. The sequence is that of FK506-binding protein 2 (FPR2) from Podospora anserina (Pleurage anserina).